A 208-amino-acid chain; its full sequence is EF-hand protein 5 variant 1 (208 aa).

Positions 1-34 (MQARGTVKVQGDAKVDGKMSTGQHSHHQHLNSTQ) are disordered. EF-hand domains follow at residues 64–98 (MAEGFYVLSGGYKKLFIPSKDVYALMQNVGMHLTE), 99–134 (EEFHDALRVIGQSEPQNADELSFSDFLLLMTREVDD), 135–170 (TMADELRSAFFHYDKYKTGYVTRKQFTELFATLGER), and 171–206 (STPEELEELLAVAEVDETDDKIDYNRFVNELTSRVN). Ca(2+) contacts are provided by Glu-118, Asp-123, Asp-148, Thr-152, and Tyr-154.

The sequence is that of EF-hand protein 5 variant 1 from Trypanosoma cruzi.